A 64-amino-acid chain; its full sequence is Large ribosomal subunit protein bL35 (64 aa).

Residues 1–21 (MPKMKTNRGAAKRFKVKKSGK) form a disordered region. Basic residues predominate over residues 10–21 (AAKRFKVKKSGK).

It belongs to the bacterial ribosomal protein bL35 family.

The chain is Large ribosomal subunit protein bL35 from Nautilia profundicola (strain ATCC BAA-1463 / DSM 18972 / AmH).